The following is a 229-amino-acid chain: Cytochrome c oxidase subunit 2 (229 aa).

Residues 1 to 26 (MSTWANLGLQDSASPLMEQLIFFHDH) are Mitochondrial intermembrane-facing. The chain crosses the membrane as a helical span at residues 27–48 (ALLILVMITVLVGYLMFMLFFN). Topologically, residues 49–62 (SYVNRFLLHGQLIE) are mitochondrial matrix. The helical transmembrane segment at 63–82 (MIWTILPAIILLFIAMPSLR) threads the bilayer. Over 83–229 (LLYLLDEINE…IKWISNSVNS (147 aa)) the chain is Mitochondrial intermembrane. Cu cation contacts are provided by His-161, Cys-196, Glu-198, Cys-200, His-204, and Met-207. Residue Glu-198 participates in Mg(2+) binding.

Belongs to the cytochrome c oxidase subunit 2 family. In terms of assembly, component of the cytochrome c oxidase (complex IV, CIV), a multisubunit enzyme composed of a catalytic core of 3 subunits and several supernumerary subunits. The complex exists as a monomer or a dimer and forms supercomplexes (SCs) in the inner mitochondrial membrane with ubiquinol-cytochrome c oxidoreductase (cytochrome b-c1 complex, complex III, CIII). The cofactor is Cu cation.

The protein localises to the mitochondrion inner membrane. It carries out the reaction 4 Fe(II)-[cytochrome c] + O2 + 8 H(+)(in) = 4 Fe(III)-[cytochrome c] + 2 H2O + 4 H(+)(out). Component of the cytochrome c oxidase, the last enzyme in the mitochondrial electron transport chain which drives oxidative phosphorylation. The respiratory chain contains 3 multisubunit complexes succinate dehydrogenase (complex II, CII), ubiquinol-cytochrome c oxidoreductase (cytochrome b-c1 complex, complex III, CIII) and cytochrome c oxidase (complex IV, CIV), that cooperate to transfer electrons derived from NADH and succinate to molecular oxygen, creating an electrochemical gradient over the inner membrane that drives transmembrane transport and the ATP synthase. Cytochrome c oxidase is the component of the respiratory chain that catalyzes the reduction of oxygen to water. Electrons originating from reduced cytochrome c in the intermembrane space (IMS) are transferred via the dinuclear copper A center (CU(A)) of subunit 2 and heme A of subunit 1 to the active site in subunit 1, a binuclear center (BNC) formed by heme A3 and copper B (CU(B)). The BNC reduces molecular oxygen to 2 water molecules using 4 electrons from cytochrome c in the IMS and 4 protons from the mitochondrial matrix. The protein is Cytochrome c oxidase subunit 2 (mt:CoII) of Drosophila narragansett (Fruit fly).